The sequence spans 3678 residues: Dystrophin (3678 aa).

Residues 1-240 (MLWWEEVEDC…YITSLFQVLP (240 aa)) form an actin-binding region. 2 Calponin-homology (CH) domains span residues 15–119 (DVQK…LHWQ) and 134–240 (TNSE…QVLP). Positions 63–72 (PKEKGSTRVH) are ANK2- and ANK-3 binding. The segment at 313–333 (DSTQSPYPSQHLEAPRDKSLD) is disordered. 24 Spectrin repeats span residues 341–449 (VNLD…KLHK), 450–558 (VLMD…VLQD), 561–669 (LKWQ…QISQ), 721–830 (ELRK…WLEY), 832–936 (TNII…ELQT), 945–1047 (RYQE…KLEE), 1050–1156 (NKLR…ALKA), 1159–1265 (DKTV…TLEE), 1268–1369 (ACWH…LLEQ), 1370–1465 (SIQS…LFQK), 1470–1570 (EQRL…QLEK), 1573–1678 (KLSR…LLLE), 1681–1780 (KHME…KASI), 1781–1876 (PLKE…KALE), 1879–1981 (HQWY…TLHE), 1994–2103 (DVSY…RFDR), 2106–2210 (EKWR…RIEE), 2213–2318 (NVLS…ELEV), 2319–2416 (HLKD…LRTK), 2468–2570 (FNRA…QLNE), 2573–2679 (KDST…ALEE), 2682–2795 (RLLQ…HLEA), 2801–2923 (KRLH…RKID), and 2928–3033 (RLQE…QLHE). Residues 1417 to 1915 (SDLTSHEISL…PEPRDERKLK (499 aa)) are interaction with SYNM. The WW domain occupies 3048–3081 (TSVQGPWERAISPNKVPYYINHETQTTCWDHPKM). The tract at residues 3051-3401 (QGPWERAISP…TVLEGDNMET (351 aa)) is interaction with SYNM. Residues 3301–3357 (KHQAKCNICKECPIIGFRYRSLKHFNYDICQSCFFSGRVAKGHKMHYPMVEYCTPTT) form a ZZ-type; degenerate zinc finger. The Zn(2+) site is built by C3306, C3309, C3330, and C3333. A binds to SNTB1 region spans residues 3459–3511 (DDEHLLIQHYCQSLNQDSPLSQPRSPAQILISLESEERGELERILADLEEENR). 3 positions are modified to phosphoserine: S3476, S3483, and S3493. Disordered stretches follow at residues 3521–3547 (KQQH…QSPR) and 3596–3678 (EAKV…EDTM). 2 stretches are compositionally biased toward polar residues: residues 3600–3619 (NGTT…SSQP) and 3655–3665 (QLNNSFPSSRG). S3605, S3606, S3610, S3616, S3617, and S3659 each carry phosphoserine.

In terms of assembly, interacts with SYNM. Interacts with the syntrophins SNTG1 and SNTG2. Interacts with KRT19. Component of the dystrophin-associated glycoprotein complex which is composed of three subcomplexes: a cytoplasmic complex comprised of DMD (or UTRN), DTNA and a number of syntrophins, such as SNTB1, SNTB2, SNTG1 and SNTG2, the transmembrane dystroglycan complex, and the sarcoglycan-sarcospan complex. Interacts with DAG1 (betaDAG1) with DMD; the interaction is inhibited by phosphorylation on the PPXY motif of DAG1. Interacts with SYNM; SNTA1 and SNTB1. Interacts with CMYA5. Directly interacts with ANK2 and ANK3; these interactions do not interfere with betaDAG1-binding and are necessary for proper localization in muscle cells. Identified in a dystroglycan complex that contains at least PRX, DRP2, UTRN, DMD and DAG1. Interacts with DTNB. Interacts with PGM5; the interaction is direct. Interacts with NOS1; localizes NOS1 to sarcolemma in muscle cells. Detected in quadriceps muscle and in sciatic nerve (at protein level). Expressed in the sarcolemma of the soleus muscle (at protein level). Differentially expressed during skeletal muscle, heart, and brain development. Also expressed in retina.

The protein resides in the cell membrane. It localises to the sarcolemma. It is found in the cytoplasm. Its subcellular location is the cytoskeleton. The protein localises to the postsynaptic cell membrane. Its function is as follows. Anchors the extracellular matrix to the cytoskeleton via F-actin. Ligand for dystroglycan. Component of the dystrophin-associated glycoprotein complex which accumulates at the neuromuscular junction (NMJ) and at a variety of synapses in the peripheral and central nervous systems and has a structural function in stabilizing the sarcolemma. Also implicated in signaling events and synaptic transmission. This Mus musculus (Mouse) protein is Dystrophin (Dmd).